A 455-amino-acid polypeptide reads, in one-letter code: Tumor necrosis factor receptor superfamily member 1A (455 aa).

Positions 1 to 29 are cleaved as a signal peptide; the sequence is MGLSTVPDLLLPLVLLELLVGIYPSGVIG. Residues 30–211 lie on the Extracellular side of the membrane; sequence LVPHLGDREK…VKGTEDSGTT (182 aa). 4 TNFR-Cys repeats span residues 43–82, 83–125, 126–166, and 167–196; these read VCPQGKYIHPQNNSICCTKCHKGTYLYNDCPGPGQDTDCR, ECES…DTVC, GCRK…NTVC, and TCHAGFFLRENECVSCSNCKKSLECTKLCL. Cystine bridges form between Cys-44–Cys-58, Cys-59–Cys-72, Cys-62–Cys-81, Cys-84–Cys-99, Cys-102–Cys-117, Cys-105–Cys-125, and Cys-127–Cys-143. Asn-54 carries N-linked (GlcNAc...) asparagine glycosylation. N-linked (GlcNAc...) asparagine glycosylation is found at Asn-145 and Asn-151. 5 disulfides stabilise this stretch: Cys-146-Cys-158, Cys-149-Cys-166, Cys-168-Cys-179, Cys-182-Cys-195, and Cys-185-Cys-191. The chain crosses the membrane as a helical span at residues 212 to 232; it reads VLLPLVIFFGLCLLSLLFIGL. The Cytoplasmic portion of the chain corresponds to 233 to 455; it reads MYRYQRWKSK…ALPPAPSLLR (223 aa). The segment at 254-273 is disordered; the sequence is EKEGELEGTTTKPLAPNPSF. The segment at 338-348 is N-SMase activation domain (NSD); it reads LQKWEDSAHKP. The Death domain maps to 356-441; that stretch reads PATLYAVVEN…GCLEDIEEAL (86 aa). Arg-376 carries (Microbial infection) N-beta-linked (GlcNAc) arginine glycosylation.

As to quaternary structure, binding of TNF to the extracellular domain leads to homotrimerization. The aggregated death domains provide a novel molecular interface that interacts specifically with the death domain of TRADD. Various TRADD-interacting proteins such as TRAFS, RIPK1 and possibly FADD, are recruited to the complex by their association with TRADD. This complex activates at least two distinct signaling cascades, apoptosis and NF-kappa-B signaling. Interacts with BAG4, BABAM2, FEM1B, GRB2, SQSTM1 and TRPC4AP. Interacts directly with NOL3 (via CARD domain); inhibits TNF-signaling pathway. Interacts with SH3RF2, TRADD and RIPK1. SH3RF2 facilitates the recruitment of RIPK1 and TRADD to TNFRSF1A in a TNF-alpha-dependent process. Interacts with PGLYRP1; this interaction is important for cell death induction. Interacts (via death domain) with MADD (via death domain). In terms of assembly, (Microbial infection) Interacts with mumps virus protein SH; this interaction inhibits downstream NF-kappa-B pathway activation. (Microbial infection) Interacts with HCV core protein. As to quaternary structure, (Microbial infection) Interacts with human cytomegalovirus/HHV-5 protein UL138. In terms of assembly, (Microbial infection) Interacts with host TNFRSF1A; this interaction leads to the stimulation of both surface expression and shedding of TNFRSF1A. The soluble form is produced from the membrane form by proteolytic processing. In terms of processing, (Microbial infection) Glycosylated at Arg-376 by enteropathogenic E.coli protein NleB1 and S.typhimurium protein Ssek3: arginine GlcNAcylation prevents homotypic/heterotypic death domain interactions.

It localises to the cell membrane. It is found in the golgi apparatus membrane. Its subcellular location is the secreted. In terms of biological role, receptor for TNFSF2/TNF-alpha and homotrimeric TNFSF1/lymphotoxin-alpha. The adapter molecule FADD recruits caspase-8 to the activated receptor. The resulting death-inducing signaling complex (DISC) performs caspase-8 proteolytic activation which initiates the subsequent cascade of caspases (aspartate-specific cysteine proteases) mediating apoptosis. Contributes to the induction of non-cytocidal TNF effects including anti-viral state and activation of the acid sphingomyelinase. The polypeptide is Tumor necrosis factor receptor superfamily member 1A (TNFRSF1A) (Homo sapiens (Human)).